Reading from the N-terminus, the 198-residue chain is Na(+)-translocating NADH-quinone reductase subunit E (198 aa).

6 consecutive transmembrane segments (helical) span residues 11–31 (SVFIENMALSFFLGMCTFLAV), 35–55 (VSTAFGLGIAVIVVLGIAVPV), 77–97 (FLNFITFIGVIAALVQILEMV), 110–130 (GIFLPLITVNCAIFGGVSFMV), 140–160 (VVYGIGAGTGWMLAIVALAGI), and 176–196 (LGITFITVGLMALGFMSFSGI).

The protein belongs to the NqrDE/RnfAE family. Composed of six subunits; NqrA, NqrB, NqrC, NqrD, NqrE and NqrF.

Its subcellular location is the cell inner membrane. It carries out the reaction a ubiquinone + n Na(+)(in) + NADH + H(+) = a ubiquinol + n Na(+)(out) + NAD(+). NQR complex catalyzes the reduction of ubiquinone-1 to ubiquinol by two successive reactions, coupled with the transport of Na(+) ions from the cytoplasm to the periplasm. NqrA to NqrE are probably involved in the second step, the conversion of ubisemiquinone to ubiquinol. The polypeptide is Na(+)-translocating NADH-quinone reductase subunit E (Pasteurella multocida (strain Pm70)).